A 214-amino-acid polypeptide reads, in one-letter code: Ribosomal RNA small subunit methyltransferase G (214 aa).

S-adenosyl-L-methionine is bound by residues G77, F82, 128–129 (VE), and R143.

It belongs to the methyltransferase superfamily. RNA methyltransferase RsmG family.

Its subcellular location is the cytoplasm. The catalysed reaction is guanosine(527) in 16S rRNA + S-adenosyl-L-methionine = N(7)-methylguanosine(527) in 16S rRNA + S-adenosyl-L-homocysteine. Specifically methylates the N7 position of guanine in position 527 of 16S rRNA. This is Ribosomal RNA small subunit methyltransferase G from Nitrosomonas europaea (strain ATCC 19718 / CIP 103999 / KCTC 2705 / NBRC 14298).